The sequence spans 389 residues: 1-acyl-sn-glycerol-3-phosphate acyltransferase 2 (389 aa).

Residues 2–22 (VIAAAVIVPLGLLFFISGLAV) traverse the membrane as a helical segment. Residues 91-96 (HRSDID) carry the HXXXXD motif motif. 2 consecutive transmembrane segments (helical) span residues 305 to 325 (LAVV…FLHW) and 333 to 353 (KGIT…QILI). Positions 357–389 (QSERSTPAKVVPAKPKDNHHPESSSQTETEKEK) are disordered. A compositionally biased stretch (basic and acidic residues) spans 370 to 389 (KPKDNHHPESSSQTETEKEK).

Belongs to the 1-acyl-sn-glycerol-3-phosphate acyltransferase family. Interacts with GPAT9 and DGAT1. As to expression, present in roots, leaves, stems, floral buds and siliques (at protein level). Widely expressed. In contrast to LPAT1, it is not expressed at higher level in leaves.

It localises to the endoplasmic reticulum membrane. It carries out the reaction a 1-acyl-sn-glycero-3-phosphate + an acyl-CoA = a 1,2-diacyl-sn-glycero-3-phosphate + CoA. It functions in the pathway phospholipid metabolism; CDP-diacylglycerol biosynthesis; CDP-diacylglycerol from sn-glycerol 3-phosphate: step 2/3. Converts lysophosphatidic acid (LPA) into phosphatidic acid by incorporating acyl moiety at the 2 position. Has preference for C-18-CoA substrates compared to C-16-CoA substrates. Required for female but not male gametophyte development. In Arabidopsis thaliana (Mouse-ear cress), this protein is 1-acyl-sn-glycerol-3-phosphate acyltransferase 2 (LPAT2).